The primary structure comprises 345 residues: Phenylalanine--tRNA ligase alpha subunit (345 aa).

Glu-259 contributes to the Mg(2+) binding site.

The protein belongs to the class-II aminoacyl-tRNA synthetase family. Phe-tRNA synthetase alpha subunit type 1 subfamily. In terms of assembly, tetramer of two alpha and two beta subunits. Requires Mg(2+) as cofactor.

Its subcellular location is the cytoplasm. It carries out the reaction tRNA(Phe) + L-phenylalanine + ATP = L-phenylalanyl-tRNA(Phe) + AMP + diphosphate + H(+). This chain is Phenylalanine--tRNA ligase alpha subunit, found in Lactococcus lactis subsp. cremoris (strain MG1363).